Consider the following 143-residue polypeptide: Sirohydrochlorin cobaltochelatase (143 aa).

The Proton acceptor role is filled by histidine 18. Histidine 18 is a Co(2+) binding site. Residue histidine 18 participates in Ni(2+) binding. Substrate-binding positions include arginine 53 and 78-83 (LAHGVH). Residue histidine 83 coordinates Co(2+). Histidine 83 serves as a coordination point for Ni(2+).

The protein belongs to the CbiX family. CbiXS subfamily. As to quaternary structure, homotetramer; dimer of dimers.

The enzyme catalyses Co-sirohydrochlorin + 2 H(+) = sirohydrochlorin + Co(2+). It catalyses the reaction Ni-sirohydrochlorin + 2 H(+) = sirohydrochlorin + Ni(2+). The protein operates within cofactor biosynthesis; adenosylcobalamin biosynthesis; cob(II)yrinate a,c-diamide from sirohydrochlorin (anaerobic route): step 1/10. In terms of biological role, catalyzes the insertion of Co(2+) into sirohydrochlorin as part of the anaerobic pathway to cobalamin biosynthesis. Involved in the biosynthesis of the unique nickel-containing tetrapyrrole coenzyme F430, the prosthetic group of methyl-coenzyme M reductase (MCR), which plays a key role in methanogenesis and anaerobic methane oxidation (Potential). Catalyzes the insertion of Ni(2+) into sirohydrochlorin to yield Ni-sirohydrochlorin (Potential). The sequence is that of Sirohydrochlorin cobaltochelatase from Methanothermobacter thermautotrophicus (strain ATCC 29096 / DSM 1053 / JCM 10044 / NBRC 100330 / Delta H) (Methanobacterium thermoautotrophicum).